We begin with the raw amino-acid sequence, 360 residues long: Phospho-N-acetylmuramoyl-pentapeptide-transferase (360 aa).

10 helical membrane passes run 2–22 (IAILVSGAVGLLVSLFGTPLF), 52–72 (MGGVVIIAATVLGYTVANISA), 80–100 (GLLLLFLMIGLGVIGFLDDFI), 114–134 (WKIIGQGVIGVTFSVLALQFP), 156–176 (LAFAGAAVGLVLFVIWANFLI), 189–209 (LDGLATGVSVFVFSAYVVVTM), 235–255 (LAIVTAAIVGACAGFLWWNAS), 259–279 (IFMGDTGALALGGALAGLSIL), 284–304 (FLAVIIGGLFVVIVLSDVIQI), and 338–358 (FWLIAALFVALGVGIFYAEWV).

This sequence belongs to the glycosyltransferase 4 family. MraY subfamily. Mg(2+) is required as a cofactor.

The protein resides in the cell membrane. The enzyme catalyses UDP-N-acetyl-alpha-D-muramoyl-L-alanyl-gamma-D-glutamyl-meso-2,6-diaminopimeloyl-D-alanyl-D-alanine + di-trans,octa-cis-undecaprenyl phosphate = di-trans,octa-cis-undecaprenyl diphospho-N-acetyl-alpha-D-muramoyl-L-alanyl-D-glutamyl-meso-2,6-diaminopimeloyl-D-alanyl-D-alanine + UMP. The protein operates within cell wall biogenesis; peptidoglycan biosynthesis. Catalyzes the initial step of the lipid cycle reactions in the biosynthesis of the cell wall peptidoglycan: transfers peptidoglycan precursor phospho-MurNAc-pentapeptide from UDP-MurNAc-pentapeptide onto the lipid carrier undecaprenyl phosphate, yielding undecaprenyl-pyrophosphoryl-MurNAc-pentapeptide, known as lipid I. This Beutenbergia cavernae (strain ATCC BAA-8 / DSM 12333 / CCUG 43141 / JCM 11478 / NBRC 16432 / NCIMB 13614 / HKI 0122) protein is Phospho-N-acetylmuramoyl-pentapeptide-transferase.